Here is a 102-residue protein sequence, read N- to C-terminus: Small ribosomal subunit protein uS10 (102 aa).

This sequence belongs to the universal ribosomal protein uS10 family. Part of the 30S ribosomal subunit.

Its function is as follows. Involved in the binding of tRNA to the ribosomes. The chain is Small ribosomal subunit protein uS10 from Acidothermus cellulolyticus (strain ATCC 43068 / DSM 8971 / 11B).